The chain runs to 550 residues: Acyl-CoA-dependent acyltransferase MAC2 (550 aa).

It belongs to the trichothecene O-acetyltransferase family.

The protein operates within secondary metabolite biosynthesis. Its function is as follows. Acyl-CoA-dependent acyltransferase; part of the gene cluster that mediates the biosynthesis of mannosylerythritol lipids (MELs), surface-active substances that enhance the availability of water-insoluble substrates. Depending on the number of acetyl groups, mannosylerythritol lipids can be differentiated into MEL A (fully acetylated), MEL B and MEL C (monoacetylated at R-6 and R-4, respectively), and the fully deacetylated MEL D. The first step in the pathway is the generation of mannosylerythritol by the glycosyltransferase EMT1 which catalyzes the transfer of GDP-mannose to the C-4 atom of meso-erythritol. This reaction has to be stereospecific, since only mannosyl-D-erythritol is generated. The produced disaccharide is subsequently acylated with fatty acids of various lengths by the acyltransferases MAC1 and MAC2 at positions C-2 and C-3, repectively. The existence of MEL derivatives which carry an acetyl group at C-2 implies that at least MAC1 also accepts acetyl-CoA as a donor. The final step of MEL biosynthesis is the acetylation of the fully acylated mannosylerythritol lipids catalyzed by the acetyl-CoA-dependent acetyltransferase MAT1. MAT1 displays a relaxed regioselectivity and is able to transfer acetylgroups to both positions C-4 and C-6 of the mannosyl moiety. The polypeptide is Acyl-CoA-dependent acyltransferase MAC2 (Pseudozyma antarctica (strain T-34) (Yeast)).